Reading from the N-terminus, the 686-residue chain is Protein arginine N-methyltransferase 7 (686 aa).

2 consecutive SAM-dependent MTase PRMT-type domains span residues 5–352 and 357–686; these read SDDY…FSWW and DLSL…FKFD.

This sequence belongs to the class I-like SAM-binding methyltransferase superfamily. Protein arginine N-methyltransferase family. PRMT7 subfamily.

In terms of biological role, essential arginine methyltransferase that can both catalyze the formation of omega-N monomethylarginine (MMA) and symmetrical dimethylarginine (sDMA). Specifically mediates the symmetrical dimethylation of arginine residues in the small nuclear ribonucleoproteins SmD1 and SmD3. This chain is Protein arginine N-methyltransferase 7 (Art7), found in Aedes aegypti (Yellowfever mosquito).